Consider the following 222-residue polypeptide: Embryonic stem cell-related gene protein (222 aa).

In terms of tissue distribution, expressed only in fetal ovary and in undifferentiated ES cells.

It is found in the nucleus. This Homo sapiens (Human) protein is Embryonic stem cell-related gene protein (ESRG).